Here is a 185-residue protein sequence, read N- to C-terminus: Ribosome-recycling factor (185 aa).

Belongs to the RRF family.

The protein resides in the cytoplasm. In terms of biological role, responsible for the release of ribosomes from messenger RNA at the termination of protein biosynthesis. May increase the efficiency of translation by recycling ribosomes from one round of translation to another. The sequence is that of Ribosome-recycling factor from Xanthomonas campestris pv. campestris (strain 8004).